Reading from the N-terminus, the 109-residue chain is Large ribosomal subunit protein uL22 (109 aa).

This sequence belongs to the universal ribosomal protein uL22 family. Part of the 50S ribosomal subunit.

Its function is as follows. This protein binds specifically to 23S rRNA; its binding is stimulated by other ribosomal proteins, e.g. L4, L17, and L20. It is important during the early stages of 50S assembly. It makes multiple contacts with different domains of the 23S rRNA in the assembled 50S subunit and ribosome. Functionally, the globular domain of the protein is located near the polypeptide exit tunnel on the outside of the subunit, while an extended beta-hairpin is found that lines the wall of the exit tunnel in the center of the 70S ribosome. The sequence is that of Large ribosomal subunit protein uL22 from Paraburkholderia xenovorans (strain LB400).